Here is a 398-residue protein sequence, read N- to C-terminus: Acetate kinase 1 (398 aa).

Residue Asn9 coordinates Mg(2+). Lys16 contributes to the ATP binding site. Residue Arg89 participates in substrate binding. Asp146 serves as the catalytic Proton donor/acceptor. ATP-binding positions include 206–210 (HLGNG), 281–283 (DCR), and 329–333 (GIGEN). Residue Glu384 coordinates Mg(2+).

This sequence belongs to the acetokinase family. Homodimer. Requires Mg(2+) as cofactor. Mn(2+) serves as cofactor.

The protein localises to the cytoplasm. It carries out the reaction acetate + ATP = acetyl phosphate + ADP. It functions in the pathway metabolic intermediate biosynthesis; acetyl-CoA biosynthesis; acetyl-CoA from acetate: step 1/2. Catalyzes the formation of acetyl phosphate from acetate and ATP. Can also catalyze the reverse reaction. The sequence is that of Acetate kinase 1 from Photobacterium profundum (strain SS9).